We begin with the raw amino-acid sequence, 262 residues long: Phosphate import ATP-binding protein PstB (262 aa).

One can recognise an ABC transporter domain in the interval 15–257 (AKASNLNLWY…PQKSKTEQYI (243 aa)). Position 47–54 (47–54 (GPSGCGKS)) interacts with ATP.

The protein belongs to the ABC transporter superfamily. Phosphate importer (TC 3.A.1.7) family. In terms of assembly, the complex is composed of two ATP-binding proteins (PstB), two transmembrane proteins (PstC and PstA) and a solute-binding protein (PstS).

It localises to the cell inner membrane. The catalysed reaction is phosphate(out) + ATP + H2O = ADP + 2 phosphate(in) + H(+). Part of the ABC transporter complex PstSACB involved in phosphate import. Responsible for energy coupling to the transport system. The polypeptide is Phosphate import ATP-binding protein PstB (Wolinella succinogenes (strain ATCC 29543 / DSM 1740 / CCUG 13145 / JCM 31913 / LMG 7466 / NCTC 11488 / FDC 602W) (Vibrio succinogenes)).